The primary structure comprises 550 residues: Chaperonin GroEL (550 aa).

ATP is bound by residues 30-33 (TLGP), Lys-51, 87-91 (DGTTT), Gly-415, 479-481 (NAA), and Asp-495. The interval 526–550 (KDEKSDLGNSSAPSAGGMGGMGGMM) is disordered. A compositionally biased stretch (gly residues) spans 541 to 550 (GGMGGMGGMM).

This sequence belongs to the chaperonin (HSP60) family. As to quaternary structure, forms a cylinder of 14 subunits composed of two heptameric rings stacked back-to-back. Interacts with the co-chaperonin GroES.

It is found in the cytoplasm. The catalysed reaction is ATP + H2O + a folded polypeptide = ADP + phosphate + an unfolded polypeptide.. Together with its co-chaperonin GroES, plays an essential role in assisting protein folding. The GroEL-GroES system forms a nano-cage that allows encapsulation of the non-native substrate proteins and provides a physical environment optimized to promote and accelerate protein folding. This Buchnera aphidicola subsp. Baizongia pistaciae (strain Bp) protein is Chaperonin GroEL.